Reading from the N-terminus, the 266-residue chain is 3-oxoadipate enol-lactonase 1 (266 aa).

The region spanning 28–250 (PAIVFSNSLG…DASHLSNIEQ (223 aa)) is the AB hydrolase-1 domain.

The catalysed reaction is (4,5-dihydro-5-oxofuran-2-yl)-acetate + H2O = 3-oxoadipate + H(+). Its pathway is aromatic compound metabolism; beta-ketoadipate pathway; 3-oxoadipate from 5-oxo-4,5-dihydro-2-furylacetate: step 1/1. This is 3-oxoadipate enol-lactonase 1 (pcaD) from Acinetobacter baylyi (strain ATCC 33305 / BD413 / ADP1).